Here is a 189-residue protein sequence, read N- to C-terminus: Apolipoprotein D (189 aa).

The first 20 residues, 1–20 (MGMMLLLLSMLAGLVAEAEG), serve as a signal peptide directing secretion. A Pyrrolidone carboxylic acid modification is found at Q21. 2 cysteine pairs are disulfide-bonded: C28–C134 and C61–C185. N-linked (GlcNAc...) asparagine glycosylation is found at N65 and N98.

It belongs to the calycin superfamily. Lipocalin family. Homodimer.

It localises to the secreted. In terms of biological role, APOD occurs in the macromolecular complex with lecithin-transport and binding of bilin. Appears to be able to transport a variety of ligands in a number of different contexts. In Cavia porcellus (Guinea pig), this protein is Apolipoprotein D (APOD).